A 176-amino-acid polypeptide reads, in one-letter code: MTNIRKSHPLIKIVNDAFIDLPAPSNISSWWNFGSLLGICLAVQILTGLFLAMHYTSDTATAFNSVTHICRDVNYGWLLRYLHANGASMFFICLYLHIGRGLYYGSYTYTETWNVGVILLFAVMATAFMGYVLPWGQMSSWGATVITNLLSAIPYMGTDLVGWIWGGFSVDKATLT.

The next 3 membrane-spanning stretches (helical) occupy residues 33 to 53 (FGSLLGICLAVQILTGLFLAM), 77 to 98 (WLLRYLHANGASMFFICLYLHI), and 113 to 133 (WNVGVILLFAVMATAFMGYVL). The heme b site is built by histidine 83 and histidine 97.

It belongs to the cytochrome b family. The cytochrome bc1 complex contains 11 subunits: 3 respiratory subunits (MT-CYB, CYC1 and UQCRFS1), 2 core proteins (UQCRC1 and UQCRC2) and 6 low-molecular weight proteins (UQCRH/QCR6, UQCRB/QCR7, UQCRQ/QCR8, UQCR10/QCR9, UQCR11/QCR10 and a cleavage product of UQCRFS1). This cytochrome bc1 complex then forms a dimer. Heme b serves as cofactor.

It localises to the mitochondrion inner membrane. Component of the ubiquinol-cytochrome c reductase complex (complex III or cytochrome b-c1 complex) that is part of the mitochondrial respiratory chain. The b-c1 complex mediates electron transfer from ubiquinol to cytochrome c. Contributes to the generation of a proton gradient across the mitochondrial membrane that is then used for ATP synthesis. This chain is Cytochrome b (MT-CYB), found in Eumops glaucinus (Wagner's mastiff bat).